Here is a 366-residue protein sequence, read N- to C-terminus: tRNA/tmRNA (uracil-C(5))-methyltransferase (366 aa).

Residues Gln-190, Tyr-218, Asn-223, Glu-239, and Asp-299 each contribute to the S-adenosyl-L-methionine site. Catalysis depends on Cys-324, which acts as the Nucleophile. Glu-358 functions as the Proton acceptor in the catalytic mechanism.

It belongs to the class I-like SAM-binding methyltransferase superfamily. RNA M5U methyltransferase family. TrmA subfamily.

The enzyme catalyses uridine(54) in tRNA + S-adenosyl-L-methionine = 5-methyluridine(54) in tRNA + S-adenosyl-L-homocysteine + H(+). The catalysed reaction is uridine(341) in tmRNA + S-adenosyl-L-methionine = 5-methyluridine(341) in tmRNA + S-adenosyl-L-homocysteine + H(+). In terms of biological role, dual-specificity methyltransferase that catalyzes the formation of 5-methyluridine at position 54 (m5U54) in all tRNAs, and that of position 341 (m5U341) in tmRNA (transfer-mRNA). The polypeptide is tRNA/tmRNA (uracil-C(5))-methyltransferase (Escherichia coli O157:H7 (strain EC4115 / EHEC)).